Here is a 498-residue protein sequence, read N- to C-terminus: ATP synthase subunit beta, chloroplastic (498 aa).

172–179 contributes to the ATP binding site; sequence GGAGVGKT.

The protein belongs to the ATPase alpha/beta chains family. In terms of assembly, F-type ATPases have 2 components, CF(1) - the catalytic core - and CF(0) - the membrane proton channel. CF(1) has five subunits: alpha(3), beta(3), gamma(1), delta(1), epsilon(1). CF(0) has four main subunits: a(1), b(1), b'(1) and c(9-12).

Its subcellular location is the plastid. It localises to the chloroplast thylakoid membrane. The catalysed reaction is ATP + H2O + 4 H(+)(in) = ADP + phosphate + 5 H(+)(out). Functionally, produces ATP from ADP in the presence of a proton gradient across the membrane. The catalytic sites are hosted primarily by the beta subunits. This chain is ATP synthase subunit beta, chloroplastic, found in Helianthus annuus (Common sunflower).